The following is a 503-amino-acid chain: Zinc metalloproteinase nas-14 (503 aa).

The N-terminal stretch at 1–25 is a signal peptide; the sequence is MRLLYSLFHCSAFLVGFTLSVGVLP. The Peptidase M12A domain occupies 116–312; that stretch reads NLVTYPDKLW…KKVNKLYQCG (197 aa). 2 cysteine pairs are disulfide-bonded: Cys158/Cys311 and Cys182/Cys202. Residue Asn192 is glycosylated (N-linked (GlcNAc...) asparagine). Residue His210 participates in Zn(2+) binding. Residue Glu211 is part of the active site. Zn(2+) contacts are provided by His214 and His220. Residues 317-340 are compositionally biased toward low complexity; that stretch reads TSSTTTTTTTTTTTTTTEEPTTTT. The tract at residues 317–377 is disordered; that stretch reads TSSTTTTTTT…TPKPVERSRN (61 aa). The span at 342-351 shows a compositional bias: basic and acidic residues; sequence VEEKPKDKKV. The segment covering 352 to 370 has biased composition (low complexity); sequence SSTTTTTKKPTTTTTTTPK. Cystine bridges form between Cys380-Cys414, Cys387-Cys407, and Cys396-Cys411. The region spanning 380–414 is the ShKT 1 domain; sequence CEDLNAHCGMWEQLGHCQHSVKYMAHYCRKACNLC. A disordered region spans residues 422-464; the sequence is TTTTPKPVPRNKEKENKSASSTTRGTSTATSTTPKTTTTTTSA. An N-linked (GlcNAc...) asparagine glycan is attached at Asn437. Residues 439–464 are compositionally biased toward low complexity; it reads SASSTTRGTSTATSTTPKTTTTTTSA. 3 cysteine pairs are disulfide-bonded: Cys469-Cys503, Cys476-Cys496, and Cys485-Cys500. Positions 469 to 503 constitute a ShKT 2 domain; that stretch reads CEDKNLFCSYWAKIGECNSESKFMKIFCKASCGKC.

Zn(2+) serves as cofactor. Expressed in pharyngeal muscles and mc cells.

It is found in the secreted. Metalloprotease. In Caenorhabditis elegans, this protein is Zinc metalloproteinase nas-14 (nas-14).